The following is a 261-amino-acid chain: 2-phytyl-1,4-beta-naphthoquinone methyltransferase, chloroplastic (261 aa).

Residues 1 to 30 (MAALLGIVSPVTFTGKHPVNSRSRRRTVVK) constitute a chloroplast transit peptide.

Belongs to the class I-like SAM-binding methyltransferase superfamily. MenG/UbiE family.

It localises to the plastid. Its subcellular location is the chloroplast. It catalyses the reaction demethylphylloquinol + S-adenosyl-L-methionine = phylloquinol + S-adenosyl-L-homocysteine + H(+). In terms of biological role, involved in the biosynthesis of phylloquinone (vitamin K1). Methyltransferase required for the conversion of 2-phytyl-1,4-beta-naphthoquinol to phylloquinol. The polypeptide is 2-phytyl-1,4-beta-naphthoquinone methyltransferase, chloroplastic (Arabidopsis thaliana (Mouse-ear cress)).